A 189-amino-acid polypeptide reads, in one-letter code: uncharacterized protein (189 aa).

The N-terminal stretch at 1–19 is a signal peptide; sequence MNKLTILFLILALISVIYA. Residues 24 to 189 are disordered; the sequence is PSSSEDSSSN…GSGSSGTVYY (166 aa). Over residues 25 to 69 the composition is skewed to low complexity; that stretch reads SSSEDSSSNDSNSQVTGSQSYSGSQSDSNSGSESHTINTGSSYSG. A compositionally biased stretch (gly residues) spans 70-101; sequence SGSGSSGISGGSGSGSGSGSGSGSGSGSGSGA. The span at 102–142 shows a compositional bias: low complexity; that stretch reads VSGSQSGSGAVSGSQSGSGAVSGSQSGVQTGSQSGAGSASG. The span at 144–157 shows a compositional bias: polar residues; sequence FTGNPSGSQSQEIN. The span at 165–183 shows a compositional bias: gly residues; that stretch reads SGSGAPTGAATGSGSGSGS.

This is an uncharacterized protein from Dictyostelium discoideum (Social amoeba).